The primary structure comprises 666 residues: Sodium/potassium/calcium exchanger 2 (666 aa).

The Cytoplasmic portion of the chain corresponds to 1-38 (MDLHQSPTARLLQKWCSHESPFGCRRHYNSRKKLKLIR). The chain crosses the membrane as a helical span at residues 39-59 (VIGLVMGLVAVSTVPFSISAF). The Extracellular portion of the chain corresponds to 60 to 133 (TETDSQSNRG…DIFSLEERRK (74 aa)). Positions 63-122 (DSQSNRGEASDMSGPRVAQGHRQRTLLDLNDKIRDYTPQPPASQEDQAENSTEHTQGDYP) are disordered. N-linked (GlcNAc...) asparagine glycosylation is present at Asn-112. The segment covering 113–122 (STEHTQGDYP) has biased composition (basic and acidic residues). Residues 134–154 (GAIILHVIGMIYMFIALAIVC) traverse the membrane as a helical segment. The Cytoplasmic segment spans residues 155-179 (DEFFVPSLTVITEKLGISDDVAGAT). One copy of the Alpha-1 repeat lies at 175–215 (VAGATFMAAGGSAPELFTSLIGVFIAHSNVGIGTIVGSAVF). Residues 180-200 (FMAAGGSAPELFTSLIGVFIA) traverse the membrane as a helical segment. Topologically, residues 201–205 (HSNVG) are extracellular. Residues 206–226 (IGTIVGSAVFNILFVIGMCAL) traverse the membrane as a helical segment. Over 227–237 (FSREILNLTWW) the chain is Cytoplasmic. A helical membrane pass occupies residues 238 to 258 (PLFRDVSFYIVDLLMLITFFL). The Extracellular portion of the chain corresponds to 259-260 (DN). Residues 261–281 (VIMWWESLLLLTAYFAYVVFM) traverse the membrane as a helical segment. The Cytoplasmic segment spans residues 282-502 (KFNVQVERWV…PDVRKPASRK (221 aa)). Residues 311–336 (KSPTAGDKDGPTLPSKPRLQRGGSSA) are disordered. Phosphoserine occurs at positions 337 and 341. The tract at residues 397 to 467 (VDENERQNGA…EEDDQPLSLS (71 aa)) is disordered. Residues 416-442 (PNSTSTEVEMTPSSEASEPVQNGNLSH) are compositionally biased toward polar residues. A helical transmembrane segment spans residues 503–523 (FFPITFFGSITWIAVFSYLMV). Over 524-538 (WWAHQVGETIGISEE) the chain is Extracellular. A helical transmembrane segment spans residues 539 to 559 (IMGLTILAAGTSIPDLITSVI). The Alpha-2 repeat unit spans residues 546–577 (AAGTSIPDLITSVIVARKGLGDMAVSSSVGSN). At 560–574 (VARKGLGDMAVSSSV) the chain is on the cytoplasmic side. Residues 575-595 (GSNIFDITVGLPLPWLLYTII) form a helical membrane-spanning segment. Over 596 to 607 (HRFSPVTVSSNG) the chain is Extracellular. A helical membrane pass occupies residues 608-628 (LFCAIVLLFIMLLFVILSIAL). The Cytoplasmic portion of the chain corresponds to 629-635 (CKWRMNK). A helical transmembrane segment spans residues 636-656 (ILGFIMFGLYFVFLVVSVLLE). The Extracellular portion of the chain corresponds to 657-666 (DKVLVCPVSI).

Belongs to the Ca(2+):cation antiporter (CaCA) (TC 2.A.19) family. SLC24A subfamily.

Its subcellular location is the cell membrane. It catalyses the reaction Ca(2+)(out) + K(+)(out) + 4 Na(+)(in) = Ca(2+)(in) + K(+)(in) + 4 Na(+)(out). Functionally, calcium, potassium:sodium antiporter that transports 1 Ca(2+) and 1 K(+) in exchange for 4 Na(+). Required for learming and memory by regulating neuronal Ca(2+), which is essential for the development of synaptic plasticity. This is Sodium/potassium/calcium exchanger 2 from Mus musculus (Mouse).